A 298-amino-acid polypeptide reads, in one-letter code: ATP phosphoribosyltransferase (298 aa).

It belongs to the ATP phosphoribosyltransferase family. Long subfamily. Requires Mg(2+) as cofactor.

The protein localises to the cytoplasm. It catalyses the reaction 1-(5-phospho-beta-D-ribosyl)-ATP + diphosphate = 5-phospho-alpha-D-ribose 1-diphosphate + ATP. It functions in the pathway amino-acid biosynthesis; L-histidine biosynthesis; L-histidine from 5-phospho-alpha-D-ribose 1-diphosphate: step 1/9. Feedback inhibited by histidine. Functionally, catalyzes the condensation of ATP and 5-phosphoribose 1-diphosphate to form N'-(5'-phosphoribosyl)-ATP (PR-ATP). Has a crucial role in the pathway because the rate of histidine biosynthesis seems to be controlled primarily by regulation of HisG enzymatic activity. This is ATP phosphoribosyltransferase from Aeromonas hydrophila subsp. hydrophila (strain ATCC 7966 / DSM 30187 / BCRC 13018 / CCUG 14551 / JCM 1027 / KCTC 2358 / NCIMB 9240 / NCTC 8049).